Consider the following 337-residue polypeptide: MAVEMFYDDDADLSIIQGRKVAVIGYGSQGHAHSLSLRDSGVQVKVGLKEGSKSREKVTEQGLEVDTPAEVAKWADVIMLLAPDTAQAEIFTNDIEPNLEDGNALFFGHGLNIHFGLIKPPANVTVGMVAPKGPGHLVRRQFVDGKGVPCLIAIDQDPKGEGQALALSYAAAIGGARAGVIKTTFKEETETDLFGEQAVLCGGTEELVKTGFEVMVEAGYAPEMAYFEVLHELKLIVDLMYEGGIARMNYSVSDTAEFGGYLSGPRVIDADTKERMRAILKDIQDGTFVKRLVANVEGGNKELEDLRKKNAEHPIEVTGKKLRDLMSWVDRPITETA.

In terms of domain architecture, KARI N-terminal Rossmann spans 3 to 183 (VEMFYDDDAD…GGARAGVIKT (181 aa)). NADP(+) is bound by residues 26–29 (YGSQ), lysine 49, serine 52, serine 54, and 84–87 (DTAQ). The active site involves histidine 109. Glycine 135 contacts NADP(+). Residues 184–329 (TFKEETETDL…KKLRDLMSWV (146 aa)) enclose the KARI C-terminal knotted domain. Mg(2+) is bound by residues aspartate 192, glutamate 196, glutamate 228, and glutamate 232. Serine 253 serves as a coordination point for substrate.

The protein belongs to the ketol-acid reductoisomerase family. The cofactor is Mg(2+).

It carries out the reaction (2R)-2,3-dihydroxy-3-methylbutanoate + NADP(+) = (2S)-2-acetolactate + NADPH + H(+). The enzyme catalyses (2R,3R)-2,3-dihydroxy-3-methylpentanoate + NADP(+) = (S)-2-ethyl-2-hydroxy-3-oxobutanoate + NADPH + H(+). Its pathway is amino-acid biosynthesis; L-isoleucine biosynthesis; L-isoleucine from 2-oxobutanoate: step 2/4. It participates in amino-acid biosynthesis; L-valine biosynthesis; L-valine from pyruvate: step 2/4. In terms of biological role, involved in the biosynthesis of branched-chain amino acids (BCAA). Catalyzes an alkyl-migration followed by a ketol-acid reduction of (S)-2-acetolactate (S2AL) to yield (R)-2,3-dihydroxy-isovalerate. In the isomerase reaction, S2AL is rearranged via a Mg-dependent methyl migration to produce 3-hydroxy-3-methyl-2-ketobutyrate (HMKB). In the reductase reaction, this 2-ketoacid undergoes a metal-dependent reduction by NADPH to yield (R)-2,3-dihydroxy-isovalerate. This Mycobacterium sp. (strain JLS) protein is Ketol-acid reductoisomerase (NADP(+)).